The primary structure comprises 479 residues: CBL-interacting serine/threonine-protein kinase 10 (479 aa).

Positions 12–266 (YDVGRLLGQG…IARIRESSWF (255 aa)) constitute a Protein kinase domain. Residues 18–26 (LGQGTFAKV) and Lys41 each bind ATP. The active-site Proton acceptor is the Asp134. An activation loop region spans residues 152–181 (DFGLSALADCKRQDGLLHTTCGTPAYVAPE). Ser156 carries the phosphoserine modification. Thr170 is subject to Phosphothreonine. Positions 286 to 323 (SVEAGTAGTNENGAGPSENGAGPSENGDRVTEENHTDE) are disordered. A compositionally biased stretch (low complexity) spans 288–300 (EAGTAGTNENGAG). The segment covering 311 to 323 (NGDRVTEENHTDE) has biased composition (basic and acidic residues). An NAF domain is found at 322 to 346 (DEPTNLNAFDLIALSAGFDLAGLFG). A PPI region spans residues 350 to 379 (KRESRFTSQKPASVIISKLEEVAQRLKLSI). The disordered stretch occupies residues 456 to 479 (SQQETEYQQQQQQEQQEQEEPLKF). The segment covering 457–470 (QQETEYQQQQQQEQ) has biased composition (low complexity).

Belongs to the protein kinase superfamily. CAMK Ser/Thr protein kinase family. SNF1 subfamily. In terms of assembly, interacts with CBL4/SOS3. The cofactor is Mn(2+). Mostly expressed in roots.

It carries out the reaction L-seryl-[protein] + ATP = O-phospho-L-seryl-[protein] + ADP + H(+). The catalysed reaction is L-threonyl-[protein] + ATP = O-phospho-L-threonyl-[protein] + ADP + H(+). CIPK serine-threonine protein kinases interact with CBL proteins. Binding of a CBL protein to the regulatory NAF domain of CIPK protein lead to the activation of the kinase in a calcium-dependent manner. This Arabidopsis thaliana (Mouse-ear cress) protein is CBL-interacting serine/threonine-protein kinase 10 (CIPK10).